Here is a 393-residue protein sequence, read N- to C-terminus: NAD(P)H-quinone oxidoreductase subunit H, chloroplastic (393 aa).

It belongs to the complex I 49 kDa subunit family. As to quaternary structure, NDH is composed of at least 16 different subunits, 5 of which are encoded in the nucleus.

The protein localises to the plastid. The protein resides in the chloroplast thylakoid membrane. It carries out the reaction a plastoquinone + NADH + (n+1) H(+)(in) = a plastoquinol + NAD(+) + n H(+)(out). The enzyme catalyses a plastoquinone + NADPH + (n+1) H(+)(in) = a plastoquinol + NADP(+) + n H(+)(out). NDH shuttles electrons from NAD(P)H:plastoquinone, via FMN and iron-sulfur (Fe-S) centers, to quinones in the photosynthetic chain and possibly in a chloroplast respiratory chain. The immediate electron acceptor for the enzyme in this species is believed to be plastoquinone. Couples the redox reaction to proton translocation, and thus conserves the redox energy in a proton gradient. The polypeptide is NAD(P)H-quinone oxidoreductase subunit H, chloroplastic (Daucus carota (Wild carrot)).